The sequence spans 167 residues: Periplasmic nitrate reductase, electron transfer subunit (167 aa).

An N-terminal signal peptide occupies residues 1–34; that stretch reads MRRAHRAGERVMMKRFGIALLAVAIAAGASSLTA. The disordered stretch occupies residues 40-65; sequence GLHGPAPLNDEGPAPPMLPNRNTSER. Heme c-binding residues include His79, Cys93, Cys96, His97, His114, Cys133, Cys136, and His137.

Belongs to the NapB family. As to quaternary structure, component of the periplasmic nitrate reductase NapAB complex composed of NapA and NapB. Binds 2 heme C groups per subunit.

The protein resides in the periplasm. In terms of biological role, electron transfer subunit of the periplasmic nitrate reductase complex NapAB. Receives electrons from the membrane-anchored tetraheme c-type NapC protein and transfers these to NapA subunit, thus allowing electron flow between membrane and periplasm. Essential for periplasmic nitrate reduction with nitrate as the terminal electron acceptor. This is Periplasmic nitrate reductase, electron transfer subunit from Bradyrhizobium japonicum.